Reading from the N-terminus, the 212-residue chain is Uridine kinase (212 aa).

Residue 13–20 (GASASGKS) participates in ATP binding.

This sequence belongs to the uridine kinase family.

The protein localises to the cytoplasm. The catalysed reaction is uridine + ATP = UMP + ADP + H(+). It catalyses the reaction cytidine + ATP = CMP + ADP + H(+). It participates in pyrimidine metabolism; CTP biosynthesis via salvage pathway; CTP from cytidine: step 1/3. Its pathway is pyrimidine metabolism; UMP biosynthesis via salvage pathway; UMP from uridine: step 1/1. In Shewanella piezotolerans (strain WP3 / JCM 13877), this protein is Uridine kinase.